We begin with the raw amino-acid sequence, 127 residues long: Nuclear transport factor 2 (127 aa).

In terms of domain architecture, NTF2 spans 11–124 (VGKQFVEHYY…FLLINDFFRL (114 aa)).

The protein localises to the cytoplasm. The protein resides in the cytosol. Its subcellular location is the nucleus outer membrane. It is found in the nucleus. It localises to the nuclear pore complex. The protein localises to the nucleus inner membrane. The protein resides in the nucleoplasm. Functionally, mediates the import of GDP-bound RAN from the cytoplasm into the nucleus which is essential for the function of RAN in cargo receptor-mediated nucleocytoplasmic transport. Thereby, plays indirectly a more general role in cargo receptor-mediated nucleocytoplasmic transport. Interacts with GDP-bound RAN in the cytosol, recruits it to the nuclear pore complex via its interaction with nucleoporins and promotes its nuclear import. This chain is Nuclear transport factor 2, found in Dictyostelium discoideum (Social amoeba).